Reading from the N-terminus, the 279-residue chain is Putative pyruvate, phosphate dikinase regulatory protein (279 aa).

Residue 152–159 (GVSRTSKS) participates in ADP binding.

The protein belongs to the pyruvate, phosphate/water dikinase regulatory protein family. PDRP subfamily.

It catalyses the reaction N(tele)-phospho-L-histidyl/L-threonyl-[pyruvate, phosphate dikinase] + ADP = N(tele)-phospho-L-histidyl/O-phospho-L-threonyl-[pyruvate, phosphate dikinase] + AMP + H(+). The catalysed reaction is N(tele)-phospho-L-histidyl/O-phospho-L-threonyl-[pyruvate, phosphate dikinase] + phosphate + H(+) = N(tele)-phospho-L-histidyl/L-threonyl-[pyruvate, phosphate dikinase] + diphosphate. In terms of biological role, bifunctional serine/threonine kinase and phosphorylase involved in the regulation of the pyruvate, phosphate dikinase (PPDK) by catalyzing its phosphorylation/dephosphorylation. The polypeptide is Putative pyruvate, phosphate dikinase regulatory protein (Anaplasma marginale (strain St. Maries)).